The chain runs to 122 residues: Acidic phospholipase A2 Tpu-E6c (122 aa).

7 disulfides stabilise this stretch: Cys26–Cys115, Cys28–Cys44, Cys43–Cys95, Cys49–Cys122, Cys50–Cys88, Cys57–Cys81, and Cys75–Cys86. Residues Tyr27, Gly29, and Gly31 each contribute to the Ca(2+) site. The active site involves His47. Asp48 provides a ligand contact to Ca(2+). The active site involves Asp89.

In terms of assembly, monomer. Requires Ca(2+) as cofactor. As to expression, expressed by the venom gland.

The protein localises to the secreted. It catalyses the reaction a 1,2-diacyl-sn-glycero-3-phosphocholine + H2O = a 1-acyl-sn-glycero-3-phosphocholine + a fatty acid + H(+). In terms of biological role, snake venom phospholipase A2 (PLA2) that impairs hemostasis. It weakly inhibits ADP-induced platelet aggregation when tested on platelet rich plasma from human and rabbit blood (15-25% of inhibition at 5-10 ug of enzyme), and dose-dependently inhibits blood coagulation, possibly by inhibiting thrombin activation. Exhibits high hydrolytic activities toward L-dipalmitoyl phosphatidylcholine. PLA2 catalyzes the calcium-dependent hydrolysis of the 2-acyl groups in 3-sn-phosphoglycerides. The polypeptide is Acidic phospholipase A2 Tpu-E6c (Craspedocephalus puniceus (Flat-nosed pitviper)).